We begin with the raw amino-acid sequence, 491 residues long: Cobyric acid synthase (491 aa).

Residues 250-441 (DLQITVVRLP…LHGLFDNGPW (192 aa)) enclose the GATase cobBQ-type domain. Cys331 serves as the catalytic Nucleophile. The active site involves His433.

Belongs to the CobB/CobQ family. CobQ subfamily.

It functions in the pathway cofactor biosynthesis; adenosylcobalamin biosynthesis. Catalyzes amidations at positions B, D, E, and G on adenosylcobyrinic A,C-diamide. NH(2) groups are provided by glutamine, and one molecule of ATP is hydrogenolyzed for each amidation. The chain is Cobyric acid synthase from Trichormus variabilis (strain ATCC 29413 / PCC 7937) (Anabaena variabilis).